The sequence spans 324 residues: Inhibitor of growth protein 1 homolog (324 aa).

The disordered stretch occupies residues Ala-120–Ala-237. Over residues Ser-140–Ser-169 the composition is skewed to low complexity. The segment covering Ser-170–His-186 has biased composition (gly residues). The span at Ser-201–Ser-229 shows a compositional bias: low complexity. A PHD-type zinc finger spans residues Pro-271–Ile-320. 8 residues coordinate Zn(2+): Cys-274, Cys-276, Cys-287, Cys-292, His-298, Cys-301, Cys-314, and Cys-317.

Belongs to the ING family. Interacts with H3K4me3 and to a lesser extent with H3K4me2.

It is found in the nucleus. Involved in regulation of the growth and differentiation transition (GDT) process, probably by regulating gene expression via histone modification. The chain is Inhibitor of growth protein 1 homolog from Dictyostelium discoideum (Social amoeba).